The primary structure comprises 263 residues: Thymidylate kinase (263 aa).

The N-terminal 51 residues, 1–51 (MKRICSVSSVQLFSRSFRALASPRSLNYPLQCIKRSSVRMESSNFSSGVRT), are a transit peptide targeting the mitochondrion. 66-74 (GLDRSGKST) is an ATP binding site.

Belongs to the thymidylate kinase family. Expressed in root, rosette leaves, flower buds, flowers and siliques.

Its subcellular location is the mitochondrion. It is found in the cytoplasm. The protein resides in the nucleus. It localises to the nucleoplasm. It catalyses the reaction dTMP + ATP = dTDP + ADP. It participates in pyrimidine metabolism; dTTP biosynthesis. In terms of biological role, catalyzes the conversion of dTMP to dTDP. Involved in the regulation of DNA replication. Is essential to promote the first division of the zygote. The protein is Thymidylate kinase of Arabidopsis thaliana (Mouse-ear cress).